The sequence spans 169 residues: UPF0398 protein Spy49_1277c (169 aa).

It belongs to the UPF0398 family.

In Streptococcus pyogenes serotype M49 (strain NZ131), this protein is UPF0398 protein Spy49_1277c.